Here is a 367-residue protein sequence, read N- to C-terminus: MSDSQTLVVKLGTSVLTGGSRRLNRAHIVELVRQCAQLHAAGHRIVIVTSGAIAAGREHLGYPELPATIASKQLLAAVGQSRLIQLWEQLFSIYGIHVGQMLLTRADMEDRERFLNARDTLRALLDNNIVPVINENDAVATAEIKVGDNDNLSALAAILAGADKLLLLTDQKGLYTADPRSNPQAELIKDVYGIDDALRAIAGDSVSGLGTGGMSTKLQAADVACRAGIDTIIAAGSKPGVIGDVMEGISVGTLFHAQATPLENRKRWIFGAPPAGEITVDEGATAAILERGSSLLPKGIKSVTGNFSRGEVIRICNLEGRDIAHGVSRYNSDALRRIAGHHSQEIDAILGYEYGSVAVHRDDMITR.

An ATP-binding site is contributed by K10. Residues S50, D137, and N149 each coordinate substrate. Residues 169-170 and 211-217 contribute to the ATP site; these read TD and TGGMSTK. One can recognise a PUA domain in the interval 275-353; the sequence is AGEITVDEGA…QEIDAILGYE (79 aa).

The protein belongs to the glutamate 5-kinase family.

Its subcellular location is the cytoplasm. The catalysed reaction is L-glutamate + ATP = L-glutamyl 5-phosphate + ADP. Its pathway is amino-acid biosynthesis; L-proline biosynthesis; L-glutamate 5-semialdehyde from L-glutamate: step 1/2. In terms of biological role, catalyzes the transfer of a phosphate group to glutamate to form L-glutamate 5-phosphate. The protein is Glutamate 5-kinase of Escherichia fergusonii (strain ATCC 35469 / DSM 13698 / CCUG 18766 / IAM 14443 / JCM 21226 / LMG 7866 / NBRC 102419 / NCTC 12128 / CDC 0568-73).